We begin with the raw amino-acid sequence, 370 residues long: Calcium/calmodulin-dependent protein kinase type 1 (370 aa).

One can recognise a Protein kinase domain in the interval 20–276 (YDFRDVLGTG…CEQALQHPWI (257 aa)). Residues 26 to 34 (LGTGAFSEV) and K49 each bind ATP. A Glycyl lysine isopeptide (Lys-Gly) (interchain with G-Cter in ubiquitin) cross-link involves residue K59. D141 acts as the Proton acceptor in catalysis. A Phosphothreonine; by CaMKK1 and CaMKK2 modification is found at T177. An autoinhibitory domain region spans residues 276–316 (IAGDTALDKNIHQSVSEQIKKNFAKSKWKQAFNATAVVRHM). The calmodulin-binding stretch occupies residues 296 to 317 (KNFAKSKWKQAFNATAVVRHMR). The Nuclear export signal motif lies at 315–321 (HMRKLQL). S363 is modified (phosphoserine).

This sequence belongs to the protein kinase superfamily. CAMK Ser/Thr protein kinase family. CaMK subfamily. In terms of assembly, monomer. Interacts with XPO1. Interacts with MARK2, ARHGEF7/BETAPIX and GIT1. In terms of processing, phosphorylated by CaMKK1 and CaMKK2 on Thr-177. Post-translationally, polybiquitinated by the E3 ubiquitin-protein ligase complex SCF(FBXL12), leading to proteasomal degradation. As to expression, widely expressed. Expressed in cells of the zona glomerulosa of the adrenal cortex.

It is found in the cytoplasm. The protein localises to the nucleus. It catalyses the reaction L-seryl-[protein] + ATP = O-phospho-L-seryl-[protein] + ADP + H(+). The catalysed reaction is L-threonyl-[protein] + ATP = O-phospho-L-threonyl-[protein] + ADP + H(+). Activated by Ca(2+)/calmodulin. Binding of calmodulin results in conformational change that relieves intrasteric autoinhibition and allows phosphorylation of Thr-177 within the activation loop by CaMKK1 or CaMKK2. Phosphorylation of Thr-177 results in several fold increase in total activity. Unlike CaMK4, is unable to exhibit autonomous activity after Ca(2+)/calmodulin activation. In terms of biological role, calcium/calmodulin-dependent protein kinase that operates in the calcium-triggered CaMKK-CaMK1 signaling cascade and, upon calcium influx, regulates transcription activators activity, cell cycle, hormone production, cell differentiation, actin filament organization and neurite outgrowth. Recognizes the substrate consensus sequence [MVLIF]-x-R-x(2)-[ST]-x(3)-[MVLIF]. Regulates axonal extension and growth cone motility in hippocampal and cerebellar nerve cells. Upon NMDA receptor-mediated Ca(2+) elevation, promotes dendritic growth in hippocampal neurons and is essential in synapses for full long-term potentiation (LTP) and ERK2-dependent translational activation. Downstream of NMDA receptors, promotes the formation of spines and synapses in hippocampal neurons by phosphorylating ARHGEF7/BETAPIX on 'Ser-694', which results in the enhancement of ARHGEF7 activity and activation of RAC1. Promotes neuronal differentiation and neurite outgrowth by activation and phosphorylation of MARK2 on 'Ser-91', 'Ser-92', 'Ser-93' and 'Ser-294'. Promotes nuclear export of HDAC5 and binding to 14-3-3 by phosphorylation of 'Ser-259' and 'Ser-498' in the regulation of muscle cell differentiation. Regulates NUMB-mediated endocytosis by phosphorylation of NUMB on 'Ser-276' and 'Ser-295'. Involved in the regulation of basal and estrogen-stimulated migration of medulloblastoma cells through ARHGEF7/BETAPIX phosphorylation. Is required for proper activation of cyclin-D1/CDK4 complex during G1 progression in diploid fibroblasts. Plays a role in K(+) and ANG2-mediated regulation of the aldosterone synthase (CYP11B2) to produce aldosterone in the adrenal cortex. Phosphorylates EIF4G3/eIF4GII. In vitro phosphorylates CREB1, ATF1, CFTR, MYL9 and SYN1/synapsin I. This Homo sapiens (Human) protein is Calcium/calmodulin-dependent protein kinase type 1 (CAMK1).